The primary structure comprises 373 residues: Anhydro-N-acetylmuramic acid kinase (373 aa).

Residue 12-19 (GTSLDGVD) coordinates ATP.

Belongs to the anhydro-N-acetylmuramic acid kinase family.

The catalysed reaction is 1,6-anhydro-N-acetyl-beta-muramate + ATP + H2O = N-acetyl-D-muramate 6-phosphate + ADP + H(+). Its pathway is amino-sugar metabolism; 1,6-anhydro-N-acetylmuramate degradation. It participates in cell wall biogenesis; peptidoglycan recycling. Catalyzes the specific phosphorylation of 1,6-anhydro-N-acetylmuramic acid (anhMurNAc) with the simultaneous cleavage of the 1,6-anhydro ring, generating MurNAc-6-P. Is required for the utilization of anhMurNAc either imported from the medium or derived from its own cell wall murein, and thus plays a role in cell wall recycling. The chain is Anhydro-N-acetylmuramic acid kinase from Salmonella newport (strain SL254).